Here is a 475-residue protein sequence, read N- to C-terminus: tRNA-2-methylthio-N(6)-dimethylallyladenosine synthase (475 aa).

One can recognise an MTTase N-terminal domain in the interval 7-127; that stretch reads RKLHIKSYGC…LPKLLAKARD (121 aa). [4Fe-4S] cluster is bound by residues Cys-16, Cys-52, Cys-90, Cys-168, Cys-172, and Cys-175. Residues 154–388 enclose the Radical SAM core domain; sequence RARGVSAFVT…AQLQALIDAQ (235 aa). Residues 394 to 456 form the TRAM domain; sequence RAAIGRTVEV…RYSLKGRLAS (63 aa).

Belongs to the methylthiotransferase family. MiaB subfamily. Monomer. The cofactor is [4Fe-4S] cluster.

Its subcellular location is the cytoplasm. The enzyme catalyses N(6)-dimethylallyladenosine(37) in tRNA + (sulfur carrier)-SH + AH2 + 2 S-adenosyl-L-methionine = 2-methylsulfanyl-N(6)-dimethylallyladenosine(37) in tRNA + (sulfur carrier)-H + 5'-deoxyadenosine + L-methionine + A + S-adenosyl-L-homocysteine + 2 H(+). Catalyzes the methylthiolation of N6-(dimethylallyl)adenosine (i(6)A), leading to the formation of 2-methylthio-N6-(dimethylallyl)adenosine (ms(2)i(6)A) at position 37 in tRNAs that read codons beginning with uridine. This is tRNA-2-methylthio-N(6)-dimethylallyladenosine synthase from Afipia carboxidovorans (strain ATCC 49405 / DSM 1227 / KCTC 32145 / OM5) (Oligotropha carboxidovorans).